A 111-amino-acid chain; its full sequence is MYYKFSSFTQKLAGAWASEAYTPQGLKPVSTEAPPIIFATPTKLTSSVTAYDYSGKNKVPELQKFFQKADGFHLKRGLPDQMLYRTTMALTLGGTIYCLIALYMASQPRNK.

A mitochondrion-targeting transit peptide spans 1-54; it reads MYYKFSSFTQKLAGAWASEAYTPQGLKPVSTEAPPIIFATPTKLTSSVTAYDYS. N6-acetyllysine is present on lysine 68. The helical transmembrane segment at 79 to 104 threads the bilayer; it reads PDQMLYRTTMALTLGGTIYCLIALYM.

The protein belongs to the cytochrome c oxidase VIIa family.

It localises to the mitochondrion inner membrane. Its function is as follows. Non-functional protein. In contrast to the protein found in other strains (AC Q99KD6), cannot induce the assembly of mitochondrial respiratory supercomplexes. The sequence is that of Cytochrome c oxidase subunit 7A2-like, mitochondrial from Mus musculus (Mouse).